A 675-amino-acid polypeptide reads, in one-letter code: Zeaxanthin epoxidase, chloroplastic (675 aa).

A chloroplast-targeting transit peptide spans 1–25 (MASTVLYNSLTTSTTVFLRSHLPIS). Residues 92–120 (RILV…KVFE) and 370–383 (KLTW…LLGD) contribute to the FAD site. An FHA domain is found at 558-622 (ICLSRKEDEP…HGTWITDNEG (65 aa)).

FAD serves as cofactor.

The protein resides in the plastid. It localises to the chloroplast thylakoid membrane. The catalysed reaction is all-trans-zeaxanthin + 4 reduced [2Fe-2S]-[ferredoxin] + 2 O2 + 4 H(+) = all-trans-violaxanthin + 4 oxidized [2Fe-2S]-[ferredoxin] + 2 H2O. It functions in the pathway plant hormone biosynthesis; abscisate biosynthesis. Its activity is regulated as follows. Inhibited by diphenyleneiodonium (DPI). Functionally, converts zeaxanthin into antheraxanthin and subsequently violaxanthin. Involved in the epoxidation of zeaxanthin. The protein is Zeaxanthin epoxidase, chloroplastic of Spinacia oleracea (Spinach).